Reading from the N-terminus, the 434-residue chain is Glutamate-1-semialdehyde 2,1-aminomutase (434 aa).

N6-(pyridoxal phosphate)lysine is present on K274.

This sequence belongs to the class-III pyridoxal-phosphate-dependent aminotransferase family. HemL subfamily. Homodimer. The cofactor is pyridoxal 5'-phosphate.

The protein resides in the cytoplasm. It catalyses the reaction (S)-4-amino-5-oxopentanoate = 5-aminolevulinate. Its pathway is porphyrin-containing compound metabolism; protoporphyrin-IX biosynthesis; 5-aminolevulinate from L-glutamyl-tRNA(Glu): step 2/2. The sequence is that of Glutamate-1-semialdehyde 2,1-aminomutase from Acidovorax ebreus (strain TPSY) (Diaphorobacter sp. (strain TPSY)).